Reading from the N-terminus, the 298-residue chain is GTPase Era (298 aa).

One can recognise an Era-type G domain in the interval 3 to 170 (KSGFVAILGR…IKLLTDNLEE (168 aa)). The interval 11–18 (GRPNVGKS) is G1. Residue 11–18 (GRPNVGKS) participates in GTP binding. A G2 region spans residues 37 to 41 (QTTRN). The G3 stretch occupies residues 58-61 (DTPG). GTP-binding positions include 58-62 (DTPGI) and 120-123 (NKID). Residues 120 to 123 (NKID) form a G4 region. A G5 region spans residues 149–151 (ISA). Residues 201 to 279 (TQQEVPHSVA…YLETWVKVKK (79 aa)) enclose the KH type-2 domain.

The protein belongs to the TRAFAC class TrmE-Era-EngA-EngB-Septin-like GTPase superfamily. Era GTPase family. As to quaternary structure, monomer.

The protein localises to the cytoplasm. Its subcellular location is the cell membrane. In terms of biological role, an essential GTPase that binds both GDP and GTP, with rapid nucleotide exchange. Plays a role in 16S rRNA processing and 30S ribosomal subunit biogenesis and possibly also in cell cycle regulation and energy metabolism. This is GTPase Era from Streptococcus pyogenes serotype M2 (strain MGAS10270).